Reading from the N-terminus, the 768-residue chain is Ribonucleoside-diphosphate reductase large chain (768 aa).

Residues 7-8 (SK) and 13-19 (EKLGIDL) each bind ATP. Residues Thr196 and Ser211 each coordinate GDP. Residues Cys212 and Cys437 are joined by a disulfide bond. DTTP contacts are provided by residues 220 to 222 (DSI), Lys237, and Arg250. Position 420 (Asn420) interacts with GDP. Asn420 acts as the Proton acceptor in catalysis. The Cysteine radical intermediate role is filled by Cys422. Glu424 serves as a coordination point for GDP. Glu424 (proton acceptor) is an active-site residue.

It belongs to the ribonucleoside diphosphate reductase large chain family. In terms of assembly, heterodimer of a large and a small subunit.

The catalysed reaction is a 2'-deoxyribonucleoside 5'-diphosphate + [thioredoxin]-disulfide + H2O = a ribonucleoside 5'-diphosphate + [thioredoxin]-dithiol. Its activity is regulated as follows. Under complex allosteric control mediated by deoxynucleoside triphosphates and ATP binding to separate specificity and activation sites on the large subunit. The type of nucleotide bound at the specificity site determines substrate preference. It seems probable that ATP makes the enzyme reduce CDP and UDP, dGTP favors ADP reduction and dTTP favors GDP reduction. Stimulated by ATP and inhibited by dATP binding to the activity site. Its function is as follows. Provides the precursors necessary for DNA synthesis. Catalyzes the biosynthesis of deoxyribonucleotides from the corresponding ribonucleotides. The polypeptide is Ribonucleoside-diphosphate reductase large chain (Encephalitozoon cuniculi (strain GB-M1) (Microsporidian parasite)).